Here is a 417-residue protein sequence, read N- to C-terminus: Citrate synthase-related protein DDB_G0287281 (417 aa).

Positions 284–317 (NKNNNNNNNNNNNNNNNNNNNNNNNNSEDDDDDN) are disordered. Over residues 286-309 (NNNNNNNNNNNNNNNNNNNNNNNN) the composition is skewed to low complexity.

Belongs to the citrate synthase family.

The polypeptide is Citrate synthase-related protein DDB_G0287281 (Dictyostelium discoideum (Social amoeba)).